The chain runs to 363 residues: Carbamoyl phosphate synthase small chain (363 aa).

The CPSase stretch occupies residues 1–173; that stretch reads MMKAFLVLDN…SKYIFGTHTG (173 aa). Ser46, Gly225, and Gly227 together coordinate L-glutamine. The Glutamine amidotransferase type-1 domain occupies 177–363; the sequence is KLAVYDYGVK…YDLVEKTKKG (187 aa). Catalysis depends on Cys253, which acts as the Nucleophile. Residues Leu254, Gln257, Asn295, Gly297, and Phe298 each coordinate L-glutamine. Residues His336 and Glu338 contribute to the active site.

It belongs to the CarA family. In terms of assembly, composed of two chains; the small (or glutamine) chain promotes the hydrolysis of glutamine to ammonia, which is used by the large (or ammonia) chain to synthesize carbamoyl phosphate. Tetramer of heterodimers (alpha,beta)4.

It catalyses the reaction hydrogencarbonate + L-glutamine + 2 ATP + H2O = carbamoyl phosphate + L-glutamate + 2 ADP + phosphate + 2 H(+). The enzyme catalyses L-glutamine + H2O = L-glutamate + NH4(+). It participates in amino-acid biosynthesis; L-arginine biosynthesis; carbamoyl phosphate from bicarbonate: step 1/1. It functions in the pathway pyrimidine metabolism; UMP biosynthesis via de novo pathway; (S)-dihydroorotate from bicarbonate: step 1/3. Small subunit of the glutamine-dependent carbamoyl phosphate synthetase (CPSase). CPSase catalyzes the formation of carbamoyl phosphate from the ammonia moiety of glutamine, carbonate, and phosphate donated by ATP, constituting the first step of 2 biosynthetic pathways, one leading to arginine and/or urea and the other to pyrimidine nucleotides. The small subunit (glutamine amidotransferase) binds and cleaves glutamine to supply the large subunit with the substrate ammonia. This is Carbamoyl phosphate synthase small chain from Leptospira interrogans serogroup Icterohaemorrhagiae serovar copenhageni (strain Fiocruz L1-130).